The chain runs to 342 residues: UDP-3-O-(3-hydroxymyristoyl)glucosamine N-acyltransferase (342 aa).

His-239 serves as the catalytic Proton acceptor.

This sequence belongs to the transferase hexapeptide repeat family. LpxD subfamily. As to quaternary structure, homotrimer.

The catalysed reaction is a UDP-3-O-[(3R)-3-hydroxyacyl]-alpha-D-glucosamine + a (3R)-hydroxyacyl-[ACP] = a UDP-2-N,3-O-bis[(3R)-3-hydroxyacyl]-alpha-D-glucosamine + holo-[ACP] + H(+). The enzyme catalyses UDP-3-O-[(3R)-3-hydroxytetradecanoyl]-alpha-D-glucosamine + (3R)-hydroxytetradecanoyl-[ACP] = UDP-2-N,3-O-bis[(3R)-3-hydroxytetradecanoyl]-alpha-D-glucosamine + holo-[ACP] + H(+). It functions in the pathway glycolipid biosynthesis; lipid IV(A) biosynthesis; lipid IV(A) from (3R)-3-hydroxytetradecanoyl-[acyl-carrier-protein] and UDP-N-acetyl-alpha-D-glucosamine: step 3/6. In terms of biological role, catalyzes the N-acylation of UDP-3-O-(hydroxytetradecanoyl)glucosamine using 3-hydroxytetradecanoyl-ACP as the acyl donor. Is involved in the biosynthesis of lipid A, a phosphorylated glycolipid that anchors the lipopolysaccharide to the outer membrane of the cell. In Photorhabdus laumondii subsp. laumondii (strain DSM 15139 / CIP 105565 / TT01) (Photorhabdus luminescens subsp. laumondii), this protein is UDP-3-O-(3-hydroxymyristoyl)glucosamine N-acyltransferase.